A 201-amino-acid polypeptide reads, in one-letter code: Ribosome maturation factor RimP (201 aa).

This sequence belongs to the RimP family.

The protein localises to the cytoplasm. Its function is as follows. Required for maturation of 30S ribosomal subunits. This is Ribosome maturation factor RimP from Rhizobium johnstonii (strain DSM 114642 / LMG 32736 / 3841) (Rhizobium leguminosarum bv. viciae).